The sequence spans 146 residues: MVMGLGLFLLVFMLGLGLTPPTLAQDNSRYRDFLTKHYDATPQGRNDRYCESMMRRRGLTSPCKDINTFIHGNSRHIKAICGDENGNPYGENLRISKSPFQVTTCNLRGGSSRPPCRYRATAGFRNIVVACENDLPVHLDQSIFRP.

An N-terminal signal peptide occupies residues 1–24 (MVMGLGLFLLVFMLGLGLTPPTLA). A Pyrrolidone carboxylic acid modification is found at Gln-25. His-37 functions as the Proton acceptor in the catalytic mechanism. Arg-45 lines the tRNA pocket. 3 cysteine pairs are disulfide-bonded: Cys-50–Cys-105, Cys-63–Cys-116, and Cys-81–Cys-131. A Nucleolar localization signal motif is present at residues 55-59 (RRRGL). Positions 105 and 127 each coordinate tRNA. The active-site Proton donor is His-138.

Belongs to the pancreatic ribonuclease family. In terms of assembly, homodimer. Interacts with RNH1; inhibiting ANG ribonuclease activity. Interacts with PCNA.

It localises to the secreted. The protein resides in the nucleus. It is found in the nucleolus. Its subcellular location is the cytoplasm. The protein localises to the stress granule. Its activity is regulated as follows. Has weak tRNA ribonuclease activity by itself due to partial autoinhibition by its C-terminus, which folds into a short alpha-helix that partially occludes the substrate-binding site. In absence of stress, the ribonuclease activity is inhibited by RNH1 in the cytoplasm. In response to stress, dissociates from RNH1 in the cytoplasm and associates with cytoplasmic ribosomes with vacant A-sites: ribosomes directly activate the tRNA ribonuclease activity of ANG by refolding the C-terminal alpha-helix. In response to stress, the angiogenic activity of ANG is inhibited by RNH1 in the nucleus. Secreted ribonuclease that can either promote or restrict cell proliferation of target cells, depending on the context. Endocytosed in target cells via its receptor PLXNB2 and translocates to the cytoplasm or nucleus. Under stress conditions, localizes to the cytoplasm and promotes the assembly of stress granules (SGs): specifically cleaves a subset of tRNAs within anticodon loops to produce tRNA-derived stress-induced fragments (tiRNAs), resulting in translation repression and inhibition of cell proliferation. tiRNas also prevent formation of apoptosome, thereby promoting cell survival. Preferentially cleaves RNAs between a pyrimidine and an adenosine residue, suggesting that it cleaves the anticodon loop of tRNA(Ala) (32-UUAGCAU-38) after positions 33 and 36. Cleaves a subset of tRNAs, including tRNA(Ala), tRNA(Glu), tRNA(Gly), tRNA(Lys), tRNA(Val), tRNA(His), tRNA(Asp) and tRNA(Sec). Under growth conditions and in differentiated cells, translocates to the nucleus and stimulates ribosomal RNA (rRNA) transcription, including that containing the initiation site sequences of 45S rRNA, thereby promoting cell growth and proliferation. Angiogenin induces vascularization of normal and malignant tissues via its ability to promote rRNA transcription. Involved in hematopoietic stem and progenitor cell (HSPC) growth and survival by promoting rRNA transcription in growth conditions and inhibiting translation in response to stress, respectively. Mediates the crosstalk between myeloid and intestinal epithelial cells to protect the intestinal epithelial barrier integrity: secreted by myeloid cells and promotes intestinal epithelial cells proliferation and survival. Also mediates osteoclast-endothelial cell crosstalk in growing bone: produced by osteoclasts and protects the neighboring vascular cells against senescence by promoting rRNA transcription. In Rhinopithecus avunculus (Tonkin snub-nosed monkey), this protein is Angiogenin (ANG).